The following is a 212-amino-acid chain: Proteasome subunit beta type-2 (212 aa).

It belongs to the peptidase T1B family. In terms of assembly, the 26S proteasome consists of a 20S proteasome core and two 19S regulatory subunits. The 20S proteasome core is composed of 28 subunits that are arranged in four stacked rings, resulting in a barrel-shaped structure. The two end rings are each formed by seven alpha subunits, and the two central rings are each formed by seven beta subunits. The catalytic chamber with the active sites is on the inside of the barrel.

Its subcellular location is the cytoplasm. The protein localises to the nucleus. In terms of biological role, non-catalytic component of the proteasome, a multicatalytic proteinase complex which is characterized by its ability to cleave peptides with Arg, Phe, Tyr, Leu, and Glu adjacent to the leaving group at neutral or slightly basic pH. The proteasome has an ATP-dependent proteolytic activity. The chain is Proteasome subunit beta type-2 (PBD1) from Oryza sativa subsp. japonica (Rice).